Here is a 374-residue protein sequence, read N- to C-terminus: ATPase ASNA1 homolog (374 aa).

44–51 is a binding site for ATP; that stretch reads KGGVGKTT. Aspartate 73 is a catalytic residue. 2 residues coordinate ATP: glutamate 244 and asparagine 271.

This sequence belongs to the arsA ATPase family. Homodimer.

The protein localises to the cytoplasm. It is found in the endoplasmic reticulum. Its function is as follows. ATPase required for the post-translational delivery of tail-anchored (TA) proteins to the endoplasmic reticulum. Recognizes and selectively binds the transmembrane domain of TA proteins in the cytosol. This complex then targets to the endoplasmic reticulum by membrane-bound receptors, where the tail-anchored protein is released for insertion. This process is regulated by ATP binding and hydrolysis. ATP binding drives the homodimer towards the closed dimer state, facilitating recognition of newly synthesized TA membrane proteins. ATP hydrolysis is required for insertion. Subsequently, the homodimer reverts towards the open dimer state, lowering its affinity for the membrane-bound receptor, and returning it to the cytosol to initiate a new round of targeting. The chain is ATPase ASNA1 homolog from Plasmodium vivax (strain Salvador I).